Here is a 375-residue protein sequence, read N- to C-terminus: Probable G-protein coupled receptor 27 (375 aa).

Over 1–23 (MANASEPGGSGGGEAAALGLKLA) the chain is Extracellular. A glycan (N-linked (GlcNAc...) asparagine) is linked at Asn-3. The chain crosses the membrane as a helical span at residues 24–44 (TLSLLLCVSLAGNVLFALLIV). At 45–55 (RERSLHRAPYY) the chain is on the cytoplasmic side. A helical transmembrane segment spans residues 56-76 (LLLDLCLADGLRALACLPAVM). The Extracellular portion of the chain corresponds to 77–97 (LAARRAAAAAGAPPGALGCKL). Cys-95 and Cys-171 form a disulfide bridge. A helical transmembrane segment spans residues 98–118 (LAFLAALFCFHAAFLLLGVGV). Topologically, residues 119–139 (TRYLAIAHHRFYAERLAGWPC) are cytoplasmic. A helical transmembrane segment spans residues 140–160 (AAMLVCAAWALALAAAFPPVL). Residues 161–181 (DGGGDDEDAPCALEQRPDGAP) lie on the Extracellular side of the membrane. Residues 182–202 (GALGFLLLLAVVVGATHLVYL) form a helical membrane-spanning segment. Residues 203 to 285 (RLLFFIHDRR…FKTEKRLCKM (83 aa)) lie on the Cytoplasmic side of the membrane. Residues 286 to 306 (FYAVTLLFLLLWGPYVVASYL) form a helical membrane-spanning segment. At 307–320 (RVLVRPGAVPQAYL) the chain is on the extracellular side. The helical transmembrane segment at 321–341 (TASVWLTFAQAGINPVVCFLF) threads the bilayer. Residues 342 to 375 (NRELRDCFRAQFPCCQSPRTTQATHPCDLKGIGL) are Cytoplasmic-facing.

It belongs to the G-protein coupled receptor 1 family. In terms of tissue distribution, highly expressed as a 3.0 kb transcript in brain, ovary, testis, heart, prostate and peripheral Leukocytes. Lower levels in pancreas and small intestine. A 2.3 kb transcript was also found in peripheral Leukocytes. In brain regions, detected as a 3.0 kb transcript in all regions tested. Highest levels in the caudate nucleus, putamen, hippocampus and subthalamic nucleus. Lowest level in the cerebellum.

It is found in the cell membrane. Orphan receptor. Possible candidate for amine-like G-protein coupled receptor. The polypeptide is Probable G-protein coupled receptor 27 (GPR27) (Homo sapiens (Human)).